The sequence spans 321 residues: Sideroflexin-3 (321 aa).

The residue at position 1 (Met-1) is an N-acetylmethionine. 4 helical membrane-spanning segments follow: residues 146 to 164 (LGTA…ALGL), 174 to 194 (LVGR…NIPL), 225 to 245 (IFQV…IPPV), and 266 to 286 (LQVG…CALF).

This sequence belongs to the sideroflexin family. Widely expressed.

It localises to the mitochondrion membrane. It catalyses the reaction L-serine(in) = L-serine(out). Mitochondrial serine transporter that mediates transport of serine into mitochondria, an important step of the one-carbon metabolism pathway. Mitochondrial serine is converted to glycine and formate, which then exits to the cytosol where it is used to generate the charged folates that serve as one-carbon donors. This chain is Sideroflexin-3, found in Mus musculus (Mouse).